A 475-amino-acid polypeptide reads, in one-letter code: L-seryl-tRNA(Sec) selenium transferase (475 aa).

Lys-295 carries the N6-(pyridoxal phosphate)lysine modification.

Belongs to the SelA family. Pyridoxal 5'-phosphate serves as cofactor.

It is found in the cytoplasm. It carries out the reaction L-seryl-tRNA(Sec) + selenophosphate + H(+) = L-selenocysteinyl-tRNA(Sec) + phosphate. It participates in aminoacyl-tRNA biosynthesis; selenocysteinyl-tRNA(Sec) biosynthesis; selenocysteinyl-tRNA(Sec) from L-seryl-tRNA(Sec) (bacterial route): step 1/1. Its function is as follows. Converts seryl-tRNA(Sec) to selenocysteinyl-tRNA(Sec) required for selenoprotein biosynthesis. This chain is L-seryl-tRNA(Sec) selenium transferase, found in Desulfovibrio desulfuricans (strain ATCC 27774 / DSM 6949 / MB).